The following is a 97-amino-acid chain: Carboxysome shell protein CsoS1B (97 aa).

The region spanning 8–93 (ALGMIETRGL…PHKEVEPVLT (86 aa)) is the BMC domain.

The protein belongs to the bacterial microcompartments protein family. CsoS1 subfamily. Homohexamer with a small central pore.

It is found in the carboxysome. Functionally, one of shell proteins of the carboxysome, a polyhedral inclusion where RuBisCO (ribulose bisphosphate carboxylase, ccbL-ccbS) is sequestered. Assembles into hexamers which make sheets that form the facets of the polyhedral carboxysome. The shell probably limits the diffusion of CO(2) into and out of the carboxysome. The sequence is that of Carboxysome shell protein CsoS1B from Hydrogenovibrio crunogenus (strain DSM 25203 / XCL-2) (Thiomicrospira crunogena).